Here is a 945-residue protein sequence, read N- to C-terminus: Isoleucine--tRNA ligase (945 aa).

The span at 1–10 (MSNKKADSKP) shows a compositional bias: basic and acidic residues. The interval 1–21 (MSNKKADSKPQAKYPVNLLDT) is disordered. The 'HIGH' region motif lies at 66-76 (PYANGDIHLGH). L-isoleucyl-5'-AMP is bound at residue E581. Residues 622-626 (KMSKS) carry the 'KMSKS' region motif. K625 contributes to the ATP binding site. Zn(2+)-binding residues include C908, C911, C928, and C931.

It belongs to the class-I aminoacyl-tRNA synthetase family. IleS type 1 subfamily. As to quaternary structure, monomer. Requires Zn(2+) as cofactor.

It is found in the cytoplasm. The catalysed reaction is tRNA(Ile) + L-isoleucine + ATP = L-isoleucyl-tRNA(Ile) + AMP + diphosphate. Functionally, catalyzes the attachment of isoleucine to tRNA(Ile). As IleRS can inadvertently accommodate and process structurally similar amino acids such as valine, to avoid such errors it has two additional distinct tRNA(Ile)-dependent editing activities. One activity is designated as 'pretransfer' editing and involves the hydrolysis of activated Val-AMP. The other activity is designated 'posttransfer' editing and involves deacylation of mischarged Val-tRNA(Ile). This Burkholderia multivorans (strain ATCC 17616 / 249) protein is Isoleucine--tRNA ligase.